Here is a 255-residue protein sequence, read N- to C-terminus: Type III pantothenate kinase (255 aa).

6–13 (DIGNTNIK) serves as a coordination point for ATP. 107 to 110 (GADR) serves as a coordination point for substrate. The active-site Proton acceptor is Asp-109. Thr-132 contacts ATP. Thr-184 is a substrate binding site.

This sequence belongs to the type III pantothenate kinase family. Homodimer. NH4(+) serves as cofactor. K(+) is required as a cofactor.

It is found in the cytoplasm. It carries out the reaction (R)-pantothenate + ATP = (R)-4'-phosphopantothenate + ADP + H(+). It functions in the pathway cofactor biosynthesis; coenzyme A biosynthesis; CoA from (R)-pantothenate: step 1/5. In terms of biological role, catalyzes the phosphorylation of pantothenate (Pan), the first step in CoA biosynthesis. In Roseiflexus castenholzii (strain DSM 13941 / HLO8), this protein is Type III pantothenate kinase.